The chain runs to 208 residues: ATP synthase subunit b 1 (208 aa).

Over residues 1–18 (MFVSTAFAQTATESQPAS) the composition is skewed to polar residues. The disordered stretch occupies residues 1 to 26 (MFVSTAFAQTATESQPASTAGEHGAA). A helical transmembrane segment spans residues 56–78 (SQVLWLAITFGLFYLFLSRVVLP).

This sequence belongs to the ATPase B chain family. F-type ATPases have 2 components, F(1) - the catalytic core - and F(0) - the membrane proton channel. F(1) has five subunits: alpha(3), beta(3), gamma(1), delta(1), epsilon(1). F(0) has three main subunits: a(1), b(2) and c(10-14). The alpha and beta chains form an alternating ring which encloses part of the gamma chain. F(1) is attached to F(0) by a central stalk formed by the gamma and epsilon chains, while a peripheral stalk is formed by the delta and b chains.

The protein localises to the cell inner membrane. F(1)F(0) ATP synthase produces ATP from ADP in the presence of a proton or sodium gradient. F-type ATPases consist of two structural domains, F(1) containing the extramembraneous catalytic core and F(0) containing the membrane proton channel, linked together by a central stalk and a peripheral stalk. During catalysis, ATP synthesis in the catalytic domain of F(1) is coupled via a rotary mechanism of the central stalk subunits to proton translocation. Its function is as follows. Component of the F(0) channel, it forms part of the peripheral stalk, linking F(1) to F(0). The chain is ATP synthase subunit b 1 from Brucella abortus (strain 2308).